Here is a 454-residue protein sequence, read N- to C-terminus: Glutamyl-tRNA(Gln) amidotransferase subunit A (454 aa).

Active-site charge relay system residues include lysine 56 and serine 131. Catalysis depends on serine 155, which acts as the Acyl-ester intermediate.

This sequence belongs to the amidase family. GatA subfamily. As to quaternary structure, heterotrimer of A, B and C subunits.

It catalyses the reaction L-glutamyl-tRNA(Gln) + L-glutamine + ATP + H2O = L-glutaminyl-tRNA(Gln) + L-glutamate + ADP + phosphate + H(+). Allows the formation of correctly charged Gln-tRNA(Gln) through the transamidation of misacylated Glu-tRNA(Gln) in organisms which lack glutaminyl-tRNA synthetase. The reaction takes place in the presence of glutamine and ATP through an activated gamma-phospho-Glu-tRNA(Gln). This is Glutamyl-tRNA(Gln) amidotransferase subunit A from Campylobacter lari (strain RM2100 / D67 / ATCC BAA-1060).